Here is a 33-residue protein sequence, read N- to C-terminus: MKKLAVILTLVGGLYFAFKKYQERVNQAPNIEY.

This is an uncharacterized protein from Staphylococcus aureus (strain MW2).